The primary structure comprises 751 residues: Photosystem I P700 chlorophyll a apoprotein A1 (751 aa).

Helical transmembrane passes span 72–95, 158–181, 197–221, 293–311, 348–371, 387–413, 435–457, and 532–550; these read IFSA…FHGA, LYCT…FHYH, MNHH…HVSL, TAHH…GHMY, WHAQ…HHMY, LSLF…IFMV, AIIS…LYVH, and FLVH…LILL. Residues C574 and C583 each contribute to the [4Fe-4S] cluster site. Helical transmembrane passes span 590–611 and 665–687; these read HVFL…HFSW and LSAY…MFLF. H676 provides a ligand contact to chlorophyll a'. Chlorophyll a is bound by residues M684 and Y692. W693 provides a ligand contact to phylloquinone. Residues 725–745 traverse the membrane as a helical segment; sequence AVGVTHYLLGGIVTTWAFFLA.

Belongs to the PsaA/PsaB family. The PsaA/B heterodimer binds the P700 chlorophyll special pair and subsequent electron acceptors. PSI consists of a core antenna complex that captures photons, and an electron transfer chain that converts photonic excitation into a charge separation. The cyanobacterial PSI reaction center is composed of one copy each of PsaA,B,C,D,E,F,I,J,K,L,M and X, and forms trimeric complexes. The cofactor is PSI electron transfer chain: 5 chlorophyll a, 1 chlorophyll a', 2 phylloquinones and 3 4Fe-4S clusters. PSI core antenna: 90 chlorophyll a, 22 carotenoids, 3 phospholipids and 1 galactolipid. P700 is a chlorophyll a/chlorophyll a' dimer, A0 is one or more chlorophyll a, A1 is one or both phylloquinones and FX is a shared 4Fe-4S iron-sulfur center..

The protein resides in the cellular thylakoid membrane. The enzyme catalyses reduced [plastocyanin] + hnu + oxidized [2Fe-2S]-[ferredoxin] = oxidized [plastocyanin] + reduced [2Fe-2S]-[ferredoxin]. PsaA and PsaB bind P700, the primary electron donor of photosystem I (PSI), as well as the electron acceptors A0, A1 and FX. PSI is a plastocyanin/cytochrome c6-ferredoxin oxidoreductase, converting photonic excitation into a charge separation, which transfers an electron from the donor P700 chlorophyll pair to the spectroscopically characterized acceptors A0, A1, FX, FA and FB in turn. Oxidized P700 is reduced on the lumenal side of the thylakoid membrane by plastocyanin or cytochrome c6. The polypeptide is Photosystem I P700 chlorophyll a apoprotein A1 (Gloeothece citriformis (strain PCC 7424) (Cyanothece sp. (strain PCC 7424))).